A 347-amino-acid chain; its full sequence is DNA damage tolerance protein RHC31 (347 aa).

Ser-9 carries the phosphoserine modification. Lys-35 is covalently cross-linked (Glycyl lysine isopeptide (Lys-Gly) (interchain with G-Cter in SUMO)).

Could be involved in a ubiquitin-related process important for DNA damage tolerance. This chain is DNA damage tolerance protein RHC31 (AOS1), found in Saccharomyces cerevisiae (strain ATCC 204508 / S288c) (Baker's yeast).